The following is a 573-amino-acid chain: MAAAQTFNSNCDPGNFHKLQSFPSESVTYTCKMGSVSSLIDKQDFPHDGFNLDFKPFPEPNCKRGLHQKELLSYLNITKKEVKSNKKFHSGLGFRREHSVEGGENDYPVFYHKDHRGTEFSKSSLPERGHLDKSRFGPSALRSNVKAFMSIQSLYQSGNKLSKSNGSLNTMSCVSSPPCRGPLQPSNSHSNNQSESGNDEEDDSLSDSRQNSINSLNSYSPGFSVARGQISASLGHINHIGGSLDQASRGTRDTMAGEKGTLSCRSMATLSRLQCSGEPPPPYEYSQSVEDVARQLEERLHEKGMEARQLRRNASDNDDPFTKVFEDKRRLWMEELDELKQMYMSKLQQISQQALRSQRALQLQLYKVQQEKKRLQEELNSLRGESEELRQKQSQSDNSGPKLEDSKWEISQKAGEISLLKQQLRDSQAEINQKLGEVVSLKSQLREAKVLVKEKEKESAELSTRLQALENAKSQAPVDLPRDNSDTIDLERLRAELMLERRQNEAQMLTFETERKVWKEEKDKVLRYQKEIQSSYREMYHRNQVLERQVLELRQGVGQSPSSPAIWMDTVET.

Disordered regions lie at residues 168-216 and 382-407; these read LNTM…INSL and LRGE…EDSK. 2 stretches are compositionally biased toward polar residues: residues 184-196 and 207-216; these read QPSN…QSES and DSRQNSINSL. A coiled-coil region spans residues 289-539; it reads VEDVARQLEE…KEIQSSYREM (251 aa).

It belongs to the N4BP3 family.

Its subcellular location is the cytoplasmic vesicle. The protein resides in the cell projection. The protein localises to the axon. It localises to the dendrite. Functionally, plays a role in axon and dendrite arborization during cranial nerve development. Also important for neural crest migration and early development of other anterior structures including eye, brain and cranial cartilage. The polypeptide is NEDD4-binding protein 3-A (Xenopus laevis (African clawed frog)).